The sequence spans 64 residues: Large ribosomal subunit protein bL35 (64 aa).

The segment at 1–64 (MPKNKTNSGA…RKSIKKLLGK (64 aa)) is disordered.

Belongs to the bacterial ribosomal protein bL35 family.

This Beutenbergia cavernae (strain ATCC BAA-8 / DSM 12333 / CCUG 43141 / JCM 11478 / NBRC 16432 / NCIMB 13614 / HKI 0122) protein is Large ribosomal subunit protein bL35.